The chain runs to 589 residues: Probable ATP-dependent RNA helicase DDX59 (589 aa).

Disordered stretches follow at residues 1 to 36 (MFVP…QLEG) and 48 to 98 (KEAV…SKTQ). Over residues 12–27 (NSNDDLKSCEAKKSKP) the composition is skewed to basic and acidic residues. Lysine 26 participates in a covalent cross-link: Glycyl lysine isopeptide (Lys-Gly) (interchain with G-Cter in SUMO2). Serine 64 is modified (phosphoserine). Residues 80–91 (GVKDSHPSEEPV) show a composition bias toward basic and acidic residues. The HIT-type zinc finger occupies 104–133 (GEPVCVVCGRYGEYICDKTDEDVCSLECKA). Residues serine 156 and serine 160 each carry the phosphoserine modification. A Q motif motif is present at residues 203–231 (IDFEHCGFPETLNQNLKKSGYEVPTPIQM). A Helicase ATP-binding domain is found at 234–375 (IPVGLLGRDI…DQLLHNPVRI (142 aa)). Position 247–254 (247–254 (ADTGSGKT)) interacts with ATP. The short motif at 323–326 (VKAD) is the DEAD box element. In terms of domain architecture, Helicase C-terminal spans 399–549 (KKKKLFEILN…ILPPQLLNSP (151 aa)).

This sequence belongs to the DEAD box helicase family. DDX59 subfamily. In terms of assembly, interacts (via HIT-type zinc finger) with the RUVBL1/RUVBL2 complex in the presence of ADP.

The protein localises to the cytoplasm. It is found in the nucleus. The catalysed reaction is ATP + H2O = ADP + phosphate + H(+). In Rattus norvegicus (Rat), this protein is Probable ATP-dependent RNA helicase DDX59 (Ddx59).